Reading from the N-terminus, the 308-residue chain is Ribose 1,5-bisphosphate isomerase (308 aa).

Substrate is bound by residues 24–27 (RGAG) and arginine 67. Catalysis depends on cysteine 129, which acts as the Proton acceptor. Residue aspartate 198 is the Proton donor of the active site. Residues 208–209 (NK) and lysine 234 each bind substrate.

The protein belongs to the eIF-2B alpha/beta/delta subunits family. R15P isomerase subfamily.

The enzyme catalyses alpha-D-ribose 1,5-bisphosphate = D-ribulose 1,5-bisphosphate. Its function is as follows. Catalyzes the isomerization of ribose 1,5-bisphosphate (R15P) to ribulose 1,5-bisphosphate (RuBP), the CO(2) acceptor and substrate for RubisCO. Functions in an archaeal AMP degradation pathway, together with AMP phosphorylase and RubisCO. This Methanocaldococcus jannaschii (strain ATCC 43067 / DSM 2661 / JAL-1 / JCM 10045 / NBRC 100440) (Methanococcus jannaschii) protein is Ribose 1,5-bisphosphate isomerase.